A 205-amino-acid chain; its full sequence is Calcium-binding allergen Bet v 3 (205 aa).

Residues 1–26 (MPCSTEAMEKAGHGHASTPRKRSLSN) form a disordered region. EF-hand domains are found at residues 36 to 71 (LNTL…LGLE), 72 to 107 (TDLS…LNDS), 130 to 165 (QEEA…LGFS), and 168 to 203 (SEID…VLVR). Residues Asp49, Asn51, Asp53, and Glu60 each contribute to the Ca(2+) site. The Ca(2+) site is built by Asp143, Asp145, Asp147, Tyr149, Glu154, Asp181, Asn183, Asp185, Arg187, and Glu192.

Its function is as follows. Could be involved in calcium metabolism in pollen. Binds 3 calcium ions. The protein is Calcium-binding allergen Bet v 3 (BETVIII) of Betula pendula (European white birch).